The following is a 153-amino-acid chain: Gamma-glutamylaminecyclotransferase (153 aa).

Position 7–10 (tyrosine 7–leucine 10) interacts with substrate. Catalysis depends on glutamate 82, which acts as the Proton acceptor. The tract at residues glutamine 130 to arginine 153 is disordered. Residues proline 132–arginine 153 show a composition bias toward basic and acidic residues.

Belongs to the gamma-glutamylcyclotransferase family. In terms of assembly, monomer.

It carries out the reaction epsilon-(gamma-L-glutamyl)-L-lysine = 5-oxo-L-proline + L-lysine. Functionally, contributes to degradation of proteins cross-linked by transglutaminases by degrading the cross-link between a lysine and a glutamic acid residue. Catalyzes the formation of 5-oxo-L-proline from L-gamma-glutamyl-L-epsilon-lysine. Inactive with L-gamma-glutamyl-alpha-amino acid substrates such as L-gamma-glutamyl-L-alpha-cysteine and L-gamma-glutamyl-L-alpha-alanine. This is Gamma-glutamylaminecyclotransferase (GGACT) from Homo sapiens (Human).